A 350-amino-acid polypeptide reads, in one-letter code: Beta-hexosaminidase (350 aa).

Residues Asp73, Arg81, Arg148, and 178–179 each bind substrate; that span reads KH. The active-site Proton donor/acceptor is the His191. Asp262 serves as the catalytic Nucleophile.

This sequence belongs to the glycosyl hydrolase 3 family. NagZ subfamily.

Its subcellular location is the cytoplasm. The enzyme catalyses Hydrolysis of terminal non-reducing N-acetyl-D-hexosamine residues in N-acetyl-beta-D-hexosaminides.. Its pathway is cell wall biogenesis; peptidoglycan recycling. In terms of biological role, plays a role in peptidoglycan recycling by cleaving the terminal beta-1,4-linked N-acetylglucosamine (GlcNAc) from peptide-linked peptidoglycan fragments, giving rise to free GlcNAc, anhydro-N-acetylmuramic acid and anhydro-N-acetylmuramic acid-linked peptides. This chain is Beta-hexosaminidase, found in Bordetella avium (strain 197N).